The primary structure comprises 150 residues: FAD synthase (150 aa).

Residues 20-21, 25-28, and Asp103 contribute to the ATP site; these read TF and HPGH.

It belongs to the archaeal FAD synthase family. As to quaternary structure, homodimer. Requires a divalent metal cation as cofactor.

It carries out the reaction FMN + ATP + H(+) = FAD + diphosphate. It participates in cofactor biosynthesis; FAD biosynthesis; FAD from FMN: step 1/1. Functionally, catalyzes the transfer of the AMP portion of ATP to flavin mononucleotide (FMN) to produce flavin adenine dinucleotide (FAD) coenzyme. The sequence is that of FAD synthase from Methanohalobium evestigatum (strain ATCC BAA-1072 / DSM 3721 / NBRC 107634 / OCM 161 / Z-7303).